Consider the following 486-residue polypeptide: Protein nucleotidyltransferase YdiU (486 aa).

G90, G92, R93, K113, D125, G126, R176, and R183 together coordinate ATP. The active-site Proton acceptor is the D252. N253 and D262 together coordinate Mg(2+). Residue D262 coordinates ATP.

This sequence belongs to the SELO family. Mg(2+) serves as cofactor. Mn(2+) is required as a cofactor.

It catalyses the reaction L-seryl-[protein] + ATP = 3-O-(5'-adenylyl)-L-seryl-[protein] + diphosphate. The catalysed reaction is L-threonyl-[protein] + ATP = 3-O-(5'-adenylyl)-L-threonyl-[protein] + diphosphate. The enzyme catalyses L-tyrosyl-[protein] + ATP = O-(5'-adenylyl)-L-tyrosyl-[protein] + diphosphate. It carries out the reaction L-histidyl-[protein] + UTP = N(tele)-(5'-uridylyl)-L-histidyl-[protein] + diphosphate. It catalyses the reaction L-seryl-[protein] + UTP = O-(5'-uridylyl)-L-seryl-[protein] + diphosphate. The catalysed reaction is L-tyrosyl-[protein] + UTP = O-(5'-uridylyl)-L-tyrosyl-[protein] + diphosphate. In terms of biological role, nucleotidyltransferase involved in the post-translational modification of proteins. It can catalyze the addition of adenosine monophosphate (AMP) or uridine monophosphate (UMP) to a protein, resulting in modifications known as AMPylation and UMPylation. In Stutzerimonas stutzeri (strain A1501) (Pseudomonas stutzeri), this protein is Protein nucleotidyltransferase YdiU.